The chain runs to 148 residues: Vascular endothelial growth factor homolog (148 aa).

An N-terminal signal peptide occupies residues 1-25 (MKLTATLQVVVALLICMYNLPECVS). Intrachain disulfides connect cysteine 46–cysteine 88, cysteine 77–cysteine 130, and cysteine 81–cysteine 132. An N-linked (GlcNAc...) asparagine; by host glycan is attached at asparagine 95.

It belongs to the PDGF/VEGF growth factor family. Homodimer; disulfide-linked.

The protein localises to the secreted. Functionally, induces endothelial proliferation. The chain is Vascular endothelial growth factor homolog from Orf virus (strain NZ7) (OV NZ-7).